The primary structure comprises 776 residues: Protein SEY1 (776 aa).

Residues 1–681 (MADRSAIQLI…KRSIITTRTH (681 aa)) lie on the Cytoplasmic side of the membrane. A GB1/RHD3-type G domain is found at 34-263 (GLDYHVISVF…TENYYFKPQY (230 aa)). 44–51 (GSQSSGKS) contributes to the GTP binding site. Residues 682–702 (IPPWIYVLLAVLGWNEFVAVI) form a helical membrane-spanning segment. Topologically, residues 703 to 705 (RNP) are lumenal. A helical membrane pass occupies residues 706-726 (LFVTLTLILGATFFVIHKFGL). Topologically, residues 727–776 (WGPVVNVVQSAVGETRTAIKDKLRQFVVEDHEVKESFEMKDFSKNEQKEK) are cytoplasmic.

Belongs to the TRAFAC class dynamin-like GTPase superfamily. GB1/RHD3 GTPase family. RHD3 subfamily. As to quaternary structure, interacts with RTN1 and YOP1; GTP binding is not required for these interactions.

It localises to the endoplasmic reticulum membrane. In terms of biological role, cooperates with the reticulon proteins RTN1 and RTN2 and the tubule-shaping DP1 family protein YOP1 to generate and maintain the structure of the tubular endoplasmic reticulum network. Has GTPase activity, which is required for its function in ER organization. The chain is Protein SEY1 from Saccharomyces cerevisiae (strain RM11-1a) (Baker's yeast).